The following is a 408-amino-acid chain: MTSEKPQNESFIQKIKSTSLVSQIIVAIILASLLAVISPESAKAFGMLGSLFVNALKAVAPILVLVLVTSAIANQKMDSSAELKPIVGLYFLGTLSAALVAVLLSFAFPTELTLDLAGATANPPQKLTEVLATLAFKVVENPVTAVASGNFIAVLAWGLGLGFSLKHASESSKGMVHDLSEAISSVVRIVIRFAPLGIFGLVANTIATTGFSALGEYSHLVAVLLSAMLIIALLVNPLIVFIITKKNPYPLVFTCLKESGITAFFTRSSAANIPVNMALCKKLDLHEDTYSVSIPLGATINMAGAAITITVLTLAAAYSLNIEVSFATAILLSVVASISACGASGVAGGSLLLIPLACSLFGINNDVAMQVVAIGFIIGVIQDSAETALNSSTDVVFSAAASHHITKE.

The next 9 helical transmembrane spans lie at 19–39, 48–68, 86–106, 143–163, 193–213, 223–243, 294–314, 322–342, and 367–387; these read SLVS…VISP, LGSL…LVLV, IVGL…LLSF, VTAV…GLGF, FAPL…GFSA, VLLS…VFII, IPLG…VLTL, IEVS…SACG, and VAMQ…SAET.

It belongs to the dicarboxylate/amino acid:cation symporter (DAACS) (TC 2.A.23) family.

It is found in the cell inner membrane. It catalyses the reaction L-serine(in) + Na(+)(in) = L-serine(out) + Na(+)(out). It carries out the reaction L-threonine(in) + Na(+)(in) = L-threonine(out) + Na(+)(out). In terms of biological role, involved in the import of serine and threonine into the cell, with the concomitant import of sodium (symport system). The polypeptide is Serine/threonine transporter SstT (Colwellia psychrerythraea (strain 34H / ATCC BAA-681) (Vibrio psychroerythus)).